Here is a 128-residue protein sequence, read N- to C-terminus: Transcription antitermination protein NusB (128 aa).

The protein belongs to the NusB family.

Its function is as follows. Involved in transcription antitermination. Required for transcription of ribosomal RNA (rRNA) genes. Binds specifically to the boxA antiterminator sequence of the ribosomal RNA (rrn) operons. This chain is Transcription antitermination protein NusB, found in Exiguobacterium sp. (strain ATCC BAA-1283 / AT1b).